Consider the following 1139-residue polypeptide: Solute carrier family 12 member 5 (1139 aa).

Disordered stretches follow at residues 1–63 (MSRR…GKEY) and 92–116 (TNLPQGSREHEEAENNEGGKKKPVQ). Topologically, residues 1 to 98 (MSRRFTVTSL…ANYTNLPQGS (98 aa)) are cytoplasmic. Positions 19–45 (PDPESRRHSVADPRHLPGEDVKGDGNP) are enriched in basic and acidic residues. The segment covering 46–55 (KESSPFINST) has biased composition (polar residues). The residue at position 57 (T57) is a Phosphothreonine. The segment covering 98–111 (SREHEEAENNEGGK) has biased composition (basic and acidic residues). A discontinuously helical transmembrane segment spans residues 99–120 (REHEEAENNEGGKKKPVQAPRM). Position 113 (K113) interacts with K(+). Over 121–129 (GTFMGVYLP) the chain is Extracellular. Residues 130-151 (CLQNIFGVILFLRLTWVVGIAG) form a helical membrane-spanning segment. The Cytoplasmic portion of the chain corresponds to 152–174 (IMESFCMVFICCSCTMLTAISMS). Residues 175 to 203 (AIATNGVVPAGGSYYMISRSLGPEFGGAV) traverse the membrane as a helical segment. A184 serves as a coordination point for chloride. The Extracellular segment spans residues 204–229 (GLCFYLGTTFAGAMYILGTIEILLAY). 2 helical membrane-spanning segments follow: residues 230–250 (LFPAMAIFKAEDASGEAAAML) and 251–276 (NNMRVYGTCVLTCMATVVFVGVKYVN). Residues 277 to 402 (KFALVFLGCV…ERSGMTSVGL (126 aa)) lie on the Extracellular side of the membrane. A disulfide bridge connects residues C310 and C325. Residues N314, N333, N351, and N362 are each glycosylated (N-linked (GlcNAc...) asparagine). A disulfide bond links C345 and C354. A helical membrane pass occupies residues 403–420 (ADGTPIDMDHPYVFSDMT). K(+) is bound at residue M410. The chloride site is built by Y414 and V415. At 421–429 (SYFTLLVGI) the chain is on the cytoplasmic side. The chain crosses the membrane as a helical span at residues 430 to 453 (YFPSVTGIMAGSNRSGDLRDAQKS). D446 serves as a coordination point for K(+). The Extracellular portion of the chain corresponds to 454–485 (IPTGTILAIATTSAVYISSVVLFGACIEGVVL). Residues 486–513 (RDKFGEAVNGNLVVGTLAWPSPWVIVIG) form a helical membrane-spanning segment. Residues 514–534 (SFFSTCGAGLQSLTGAPRLLQ) are Cytoplasmic-facing. A run of 2 helical transmembrane segments spans residues 535–555 (AISRDGIVPFLQVFGHGKANG) and 556–578 (EPTWALLLTACICEIGILIASLD). E569 lines the chloride pocket. Residues 579–592 (EVAPILSMFFLMCY) are Cytoplasmic-facing. The next 2 membrane-spanning stretches (helical) occupy residues 593-615 (MFVNLACAVQTLLRTPNWRPRFR) and 616-632 (YYHWTLSFLGMSLCLAL). At 633–1139 (MFICSWYYAL…GGREVITIYS (507 aa)) the chain is on the cytoplasmic side. The segment at 667-681 (GIRGLSLSAARYALL) is scissor helix. T929 carries the phosphothreonine; by OXSR1 and STK39 modification. Residues 942–1052 (MHLTKNERER…GPSPVSSEGI (111 aa)) are disordered. Positions 945–962 (TKNEREREIQSITDESRG) are enriched in basic and acidic residues. Acidic residues predominate over residues 982–994 (TAGDSEEKPEEEV). A compositionally biased stretch (low complexity) spans 1003 to 1012 (PSCPSSSPSP). Basic and acidic residues predominate over residues 1023–1042 (DPEKVHLTWTKDKSVAEKNK). Position 1030 is a phosphothreonine; by OXSR1 and STK39 (T1030). Phosphoserine is present on residues S1045, S1048, and S1049.

The protein belongs to the SLC12A transporter family. K/Cl co-transporter subfamily. Homodimer; adopts a domain-swap conformation at the scissor helices connecting the transmembrane domain and C-terminal domain. Heterodimer with K-Cl cotransporters SLC12A6 and SLC12A7. Interacts with AP2A1. Post-translationally, phosphorylated at Thr-929 and Thr-1030 by OXSR1/OSR1 and STK39/SPAK downstream of WNK kinases (WNK1, WNK2, WNK3 or WNK4), inhibiting the potassium-chloride cotransport activity. As to expression, brain specific. Detected in neuronal cells.

It is found in the cell membrane. The protein localises to the cell projection. The protein resides in the dendrite. The enzyme catalyses K(+)(in) + chloride(in) = K(+)(out) + chloride(out). Its activity is regulated as follows. Inhibited following phosphorylation by OXSR1/OSR1 and STK39/SPAK: phosphorylation takes place downstream of WNK kinases (WNK1, WNK2, WNK3 or WNK4) in response to hyperosmotic stress and subsequent cell shrinkage. Mediates electroneutral potassium-chloride cotransport in mature neurons and is required for neuronal Cl(-) homeostasis. As major extruder of intracellular chloride, it establishes the low neuronal Cl(-) levels required for chloride influx after binding of GABA-A and glycine to their receptors, with subsequent hyperpolarization and neuronal inhibition. Involved in the regulation of dendritic spine formation and maturation. The protein is Solute carrier family 12 member 5 of Homo sapiens (Human).